We begin with the raw amino-acid sequence, 173 residues long: Ribosome maturation factor RimP (173 aa).

It belongs to the RimP family.

The protein localises to the cytoplasm. In terms of biological role, required for maturation of 30S ribosomal subunits. This Pelodictyon phaeoclathratiforme (strain DSM 5477 / BU-1) protein is Ribosome maturation factor RimP.